The following is a 687-amino-acid chain: MSSYVGVLVSDPWLQSQFTQVELRTLKSKFVSNKTQLGRFTVGDLPPVFEKLKAFNGTIDEDEIKSVLDKSYPNADDEVDFEFFLRAFLSVQARGVEKSGGSKGASSFLKTSTTTVHHAINESEKASYVSHVNNYLRDDPFLKSYLPIDPATNAFFDLVKDGVLLCKLINVAVPGTIDERAINTKKTLNPWERNENLTLGLNSAKAIGCTVVNIGTQDIAEGRPYLVLGLISQIIKIQMLADLNFKKTPSLFQLVDDTQDAEELMGLAPEKVLLKWMNFHLKKAGYEKQVTNFSSDLKDGEAYAYLLNALAPEHSTHVALETKDPTERAKKVLEQAEKLDCKRYLSPKDIVDGSANLNLAFVAQIFQHRNGLTVDDSKTSFAEMMTDDVETSREERCFRLWINSLGTATYVNNVFEDLRNGWVLLEVLDKVSPGSVNWKHANKPPIKMPFKKVENCNEVIKIGKELRFSLVNVAGNDIVQGNKKLLLAFLWQLMRYTMLQLLRNLRSHSQGKEITDADILNWANRKVKRGGRTSQADSFRDKNLSSGMFFLELLSAVEPRVVNWSLVTNGETEEDKKLNATYIISVARKLGCSIFLLPEDIIEVNQKMMLILAASIMYWSLQQQSDTESTVSEDATDDGDANSVAGEISNLSIDGASESSPTVQDQELLTKADNDEDEVDGENNKDA.

In terms of domain architecture, EF-hand spans 7–74 (VLVSDPWLQS…KSVLDKSYPN (68 aa)). Calponin-homology (CH) domains are found at residues 122–239 (ESEK…KIQM), 267–370 (LAPE…QHRN), 392–498 (SREE…RYTM), and 513–621 (EITD…YWSL). Actin-binding regions lie at residues 122-370 (ESEK…QHRN) and 392-621 (SREE…YWSL). The disordered stretch occupies residues 628 to 687 (ESTVSEDATDDGDANSVAGEISNLSIDGASESSPTVQDQELLTKADNDEDEVDGENNKDA). Residues 649–667 (SNLSIDGASESSPTVQDQE) show a composition bias toward polar residues.

Interacts with F-actin. In terms of tissue distribution, expressed in mature pollen.

It localises to the cytoplasm. The protein localises to the cytoskeleton. Functionally, cross-links actin filaments (F-actin) in a calcium independent manner. Induces the formation of actin bundles. Stabilizes and prevents F-actin depolymerization mediated by latrunculin B (LatB). The polypeptide is Fimbrin-5 (Arabidopsis thaliana (Mouse-ear cress)).